Reading from the N-terminus, the 126-residue chain is Class I hydrophobin 1 (126 aa).

A signal peptide spans 1–16; sequence MQYMTIVAFLAATVAA. 4 disulfide bridges follow: Cys-38/Cys-100, Cys-46/Cys-94, Cys-47/Cys-75, and Cys-101/Cys-119.

The protein belongs to the fungal hydrophobin family.

It localises to the secreted. The protein resides in the cell wall. Its function is as follows. Aerial growth, conidiation, and dispersal of filamentous fungi in the environment rely upon a capability of their secreting small amphipathic proteins called hydrophobins (HPBs) with low sequence identity. Class I can self-assemble into an outermost layer of rodlet bundles on aerial cell surfaces, conferring cellular hydrophobicity that supports fungal growth, development and dispersal; whereas Class II form highly ordered films at water-air interfaces through intermolecular interactions but contribute nothing to the rodlet structure. HYD1 and HYD2 are required for the structural integrity of the long aerial chains of microconidia. Does not seem to be important for the ability to cause seedling disease. In Gibberella moniliformis (Maize ear and stalk rot fungus), this protein is Class I hydrophobin 1.